The chain runs to 722 residues: Mesentericin-Y105 transport/processing ATP-binding protein MesD (722 aa).

Residues 16–143 (QVDERDCGVA…EEWTGVSIFI (128 aa)) enclose the Peptidase C39 domain. C22 is an active-site residue. Helical transmembrane passes span 171–191 (LLVI…ILGS), 210–230 (LGIV…LSYA), 242–262 (LSID…MSFF), 287–307 (TMLS…VLVV), 311–331 (TLFL…WLFM), 401–421 (SLLQ…LVMT), 429–449 (LITY…IINL), and 518–538 (IALV…LVNF). Positions 173–455 (VINIVIAALL…IINLQTKLQQ (283 aa)) constitute an ABC transmembrane type-1 domain. Positions 489-722 (LVADHITYKY…GGFYASLFNH (234 aa)) constitute an ABC transporter domain. Residue 522 to 529 (GISGSGKS) participates in ATP binding.

This sequence belongs to the ABC transporter superfamily.

Its subcellular location is the cell membrane. Functionally, involved in the export process of the bacteriocin mesentericin-Y105. This chain is Mesentericin-Y105 transport/processing ATP-binding protein MesD (mesD), found in Leuconostoc mesenteroides.